Here is a 936-residue protein sequence, read N- to C-terminus: Isoleucine--tRNA ligase (936 aa).

The 'HIGH' region signature appears at 58–68 (PYANGRAHLGT). Glu561 contacts L-isoleucyl-5'-AMP. Positions 602–606 (KMSKS) match the 'KMSKS' region motif. Residue Lys605 coordinates ATP. Positions 899, 902, 919, and 922 each coordinate Zn(2+).

The protein belongs to the class-I aminoacyl-tRNA synthetase family. IleS type 1 subfamily. As to quaternary structure, monomer. Zn(2+) serves as cofactor.

It localises to the cytoplasm. The enzyme catalyses tRNA(Ile) + L-isoleucine + ATP = L-isoleucyl-tRNA(Ile) + AMP + diphosphate. Functionally, catalyzes the attachment of isoleucine to tRNA(Ile). As IleRS can inadvertently accommodate and process structurally similar amino acids such as valine, to avoid such errors it has two additional distinct tRNA(Ile)-dependent editing activities. One activity is designated as 'pretransfer' editing and involves the hydrolysis of activated Val-AMP. The other activity is designated 'posttransfer' editing and involves deacylation of mischarged Val-tRNA(Ile). The chain is Isoleucine--tRNA ligase from Coxiella burnetii (strain RSA 331 / Henzerling II).